We begin with the raw amino-acid sequence, 498 residues long: Ulvan-active sulfatase (498 aa).

An N-terminal signal peptide occupies residues Met-1–Ser-22. 5 residues coordinate Ca(2+): Asp-55, Asp-56, Cys-95, Asp-266, and His-267. The Nucleophile role is filled by Cys-95. Residue Cys-95 is modified to 3-oxoalanine (Cys).

This sequence belongs to the sulfatase family. Ca(2+) serves as cofactor. In terms of processing, the conversion to 3-oxoalanine (also known as C-formylglycine, FGly), of a serine or cysteine residue in prokaryotes and of a cysteine residue in eukaryotes, is critical for catalytic activity. This post-translational modification is severely defective in multiple sulfatase deficiency (MSD).

The protein resides in the periplasm. In terms of biological role, sulfatase involved in ulvan degradation. Ulvan is the main polysaccharide component of the Ulvales (green seaweed) cell wall. It is composed of disaccharide building blocks comprising 3-sulfated rhamnose (Rha3S) linked to D-glucuronic acid (GlcA), L-iduronic acid (IduA), or D-xylose (Xyl). The protein is Ulvan-active sulfatase of Formosa agariphila (strain DSM 15362 / KCTC 12365 / LMG 23005 / KMM 3901 / M-2Alg 35-1).